Reading from the N-terminus, the 120-residue chain is Small cysteine and glycine repeat-containing protein 2 (120 aa).

The 19 X 2 AA repeats of CG stretch occupies residues 4-104 (CGCGGCGGCG…TCHSCGCGCG (101 aa)).

It belongs to the KRTAP type 28 family.

Its function is as follows. In the hair cortex, hair keratin intermediate filaments are embedded in an interfilamentous matrix, consisting of hair keratin-associated proteins (KRTAP), which are essential for the formation of a rigid and resistant hair shaft through their extensive disulfide bond cross-linking with abundant cysteine residues of hair keratins. The matrix proteins include the high-sulfur and high-glycine-tyrosine keratins. This chain is Small cysteine and glycine repeat-containing protein 2, found in Homo sapiens (Human).